The chain runs to 129 residues: ATP synthase epsilon chain (129 aa).

The protein belongs to the ATPase epsilon chain family. As to quaternary structure, F-type ATPases have 2 components, CF(1) - the catalytic core - and CF(0) - the membrane proton channel. CF(1) has five subunits: alpha(3), beta(3), gamma(1), delta(1), epsilon(1). CF(0) has three main subunits: a, b and c.

The protein resides in the cell inner membrane. Produces ATP from ADP in the presence of a proton gradient across the membrane. The polypeptide is ATP synthase epsilon chain (Campylobacter concisus (strain 13826)).